A 549-amino-acid polypeptide reads, in one-letter code: MISVIKSLLTLSVLSTLAAAKFESATPPIEVVGNKFYYSNNGTQFLLRGIAYQQDTSGSVSNGYDSDPNRKYNDPLADADACKRDVQYFIDTNTNTLRVYGIDPDKDHEECMKIFSDAGIYVIADLSEPTVSVNRINPEWNLDLYERYTKVIDNMQEYSNVLGFFAGNEVTNNRTNTDASPFVKAAVRDMKKYIKDNDYRTIPVGYSSNDDEDTRVAIADYFACGSLDDRADFFGINMYEWCGRSTFATSGYKDRTEDFKNLTIPIFFSEYGCNEVSPRVFQEVGTLYSDQMTDVWSGGIVYMYYEEANHYGLVSLNGDRVSTLADYNNYKSAIKSISPSLARRSTIQSEDSTKTMACPDNSHSTWRASTELPPTPDEEFCDCISQSFNCVVADDVDAEDYSTLFGEVCGYIDCGDISANGNTGEYGGFSFCSDKDRLSYVLNQYYHDQNERADACDFAGSASINDNASASTSCSAAGGRGLQSGRRSSTTRGGSSSSRSSSSSSSSSTGSGSSNAGIKVGGGQMSTVKLITITTIVTAFVGGLSIIFY.

The first 20 residues, 1–20 (MISVIKSLLTLSVLSTLAAA), serve as a signal peptide directing secretion. Residue Asn41 is glycosylated (N-linked (GlcNAc...) asparagine). Cys82 and Cys111 are joined by a disulfide. 2 N-linked (GlcNAc...) asparagine glycosylation sites follow: Asn173 and Asn261. Cystine bridges form between Cys224/Cys358, Cys242/Cys273, Cys381/Cys432, Cys390/Cys456, and Cys409/Cys414. N-linked (GlcNAc...) asparagine glycosylation is present at Asn467. A disordered region spans residues 470 to 518 (ASTSCSAAGGRGLQSGRRSSTTRGGSSSSRSSSSSSSSSTGSGSSNAGI). A compositionally biased stretch (low complexity) spans 484–514 (SGRRSSTTRGGSSSSRSSSSSSSSSTGSGSS).

Belongs to the glycosyl hydrolase 72 family.

The protein resides in the cell membrane. In Candida maltosa (Yeast), this protein is Protein EPD2 (EPD2).